A 63-amino-acid chain; its full sequence is Large ribosomal subunit protein bL32 (63 aa).

Belongs to the bacterial ribosomal protein bL32 family.

The polypeptide is Large ribosomal subunit protein bL32 (Lacticaseibacillus paracasei (strain ATCC 334 / BCRC 17002 / CCUG 31169 / CIP 107868 / KCTC 3260 / NRRL B-441) (Lactobacillus paracasei)).